The following is a 126-amino-acid chain: Glycine cleavage system H protein (126 aa).

One can recognise a Lipoyl-binding domain in the interval 21–103 (TATIGISEHA…YEGGWIVKVK (83 aa)). Lysine 62 bears the N6-lipoyllysine mark.

Belongs to the GcvH family. As to quaternary structure, the glycine cleavage system is composed of four proteins: P, T, L and H. It depends on (R)-lipoate as a cofactor.

Its function is as follows. The glycine cleavage system catalyzes the degradation of glycine. The H protein shuttles the methylamine group of glycine from the P protein to the T protein. This chain is Glycine cleavage system H protein, found in Vibrio campbellii (strain ATCC BAA-1116).